The chain runs to 492 residues: Glutamyl-tRNA(Gln) amidotransferase subunit A (492 aa).

Active-site charge relay system residues include lysine 84 and serine 159. The active-site Acyl-ester intermediate is the serine 183.

Belongs to the amidase family. GatA subfamily. As to quaternary structure, heterotrimer of A, B and C subunits.

It catalyses the reaction L-glutamyl-tRNA(Gln) + L-glutamine + ATP + H2O = L-glutaminyl-tRNA(Gln) + L-glutamate + ADP + phosphate + H(+). Allows the formation of correctly charged Gln-tRNA(Gln) through the transamidation of misacylated Glu-tRNA(Gln) in organisms which lack glutaminyl-tRNA synthetase. The reaction takes place in the presence of glutamine and ATP through an activated gamma-phospho-Glu-tRNA(Gln). The polypeptide is Glutamyl-tRNA(Gln) amidotransferase subunit A (Anaeromyxobacter dehalogenans (strain 2CP-C)).